The chain runs to 499 residues: Zinc finger protein PLAG1 (499 aa).

Residues 1–33 (MATVIPGDLSEVRDTQKAPSGKRKRGESKPRKN) are disordered. Residues 2-84 (ATVIPGDLSE…SKYKLQRHMA (83 aa)) are interaction with KPNA2. Positions 22–25 (KRKR) match the Nuclear localization signal motif. 7 C2H2-type zinc fingers span residues 34–56 (FPCQLCDKAFNSVEKLKVHSFSH), 62–86 (YKCTHQDCTKAFVSKYKLQRHMATH), 92–114 (HKCNYCEKMFHRKDHLKNHLHTH), 121–143 (FKCEECGKSYNTKLGFKRHLALH), 150–172 (LTCKVCLQTFESTGVLLEHLKSH), 185–207 (HQCEHCERRFYTRKDVRRHMVVH), and 213–236 (FLCQYCAQRFGRKDHLTRHMKKSH). The tract at residues 41–242 (KAFNSVEKLK…KKSHNQELLK (202 aa)) is decreased nuclear import with localization in the nucleus but also in the cytoplasm. Positions 243-383 (VKTEPVDFLD…SQASSSKLGL (141 aa)) are repression domain; contains 3 sumoylation motifs and massively decrease transcription activity. Residues 243–499 (VKTEPVDFLD…TLPRFHQAFQ (257 aa)) form an activates transcription; Inhibition of nuclear import due to lack of NLS and KPNA2 interaction region. Glycyl lysine isopeptide (Lys-Gly) (interchain with G-Cter in SUMO) cross-links involve residues Lys244 and Lys263. The interval 364-400 (QGGAPSSSQDSQASSSKLGLEPQSGSPDDGAGDLSLS) is disordered. Over residues 369-379 (SSSQDSQASSS) the composition is skewed to low complexity. Residues 384–499 (EPQSGSPDDG…TLPRFHQAFQ (116 aa)) are massively activates transcription.

Belongs to the krueppel C2H2-type zinc-finger protein family. As to quaternary structure, interacts with KPNA2, which escorts protein to the nucleus via interaction with nuclear localization signal. Interacts with E3 SUMO-protein ligase PIAS1, PIAS2 and PIAS4. Post-translationally, sumoylated with SUMO1; which inhibits transcriptional activity, but does not affect nuclear localization. Blockers of sumoylation pathway such as SENP3 and inactive UBE2I increases transcriptional capacity. Sumoylation is increased in the presence of PIAS1. In terms of processing, acetylated by lysine acetyltransferase EP300; which activates transcriptional capacity. Lysine residues that are sumoylated also seem to be target for acetylation. Expressed in heart, spleen, lung, kidney, brain, testis and epididymis but not in salivary glands.

Its subcellular location is the nucleus. Transcription factor whose activation results in up-regulation of target genes, such as IGFII, leading to uncontrolled cell proliferation: when overexpressed in cultured cells, higher proliferation rate and transformation are observed. Other target genes such as CRLF1, CRABP2, CRIP2, PIGF are strongly induced in cells with PLAG1 induction. Proto-oncogene whose ectopic expression can trigger the development of pleomorphic adenomas of the salivary gland and lipoblastomas. Cooperates with CBFB-MYH11. This Rattus norvegicus (Rat) protein is Zinc finger protein PLAG1 (Plag1).